The sequence spans 144 residues: Nucleoside diphosphate kinase (144 aa).

The ATP site is built by K11, F59, R87, T93, R104, and N114. H117 serves as the catalytic Pros-phosphohistidine intermediate.

This sequence belongs to the NDK family. As to quaternary structure, homotetramer. Requires Mg(2+) as cofactor.

The protein localises to the cytoplasm. It catalyses the reaction a 2'-deoxyribonucleoside 5'-diphosphate + ATP = a 2'-deoxyribonucleoside 5'-triphosphate + ADP. The enzyme catalyses a ribonucleoside 5'-diphosphate + ATP = a ribonucleoside 5'-triphosphate + ADP. Its function is as follows. Major role in the synthesis of nucleoside triphosphates other than ATP. The ATP gamma phosphate is transferred to the NDP beta phosphate via a ping-pong mechanism, using a phosphorylated active-site intermediate. The sequence is that of Nucleoside diphosphate kinase from Baumannia cicadellinicola subsp. Homalodisca coagulata.